Consider the following 214-residue polypeptide: Probable GTP-binding protein EngB (214 aa).

Residues 30–204 (EGFEVAFAGR…YTVLAGWMEL (175 aa)) enclose the EngB-type G domain. Residues 38–45 (GRSNAGKS), 64–68 (GRTQL), 82–85 (DLPG), 149–152 (TKAD), and 182–185 (LFSA) contribute to the GTP site. Residues S45 and T66 each contribute to the Mg(2+) site.

This sequence belongs to the TRAFAC class TrmE-Era-EngA-EngB-Septin-like GTPase superfamily. EngB GTPase family. The cofactor is Mg(2+).

Functionally, necessary for normal cell division and for the maintenance of normal septation. This chain is Probable GTP-binding protein EngB, found in Pseudomonas fluorescens (strain Pf0-1).